A 1268-amino-acid polypeptide reads, in one-letter code: Protein transport protein Sec24B (1268 aa).

2 stretches are compositionally biased toward low complexity: residues 1–14 (MSAP…AASA) and 21–48 (GGAA…GPAQ). 4 disordered regions span residues 1-71 (MSAP…SGHY), 216-263 (APTV…LTWS), 303-345 (QNVQ…SVTQ), and 362-451 (NNQA…VVPQ). N-acetylserine is present on S2. S55 is subject to Phosphoserine. Polar residues predominate over residues 225-234 (NSFSGQNTAI). Low complexity-rich tracts occupy residues 245 to 255 (SQQHHQQQSLS), 311 to 332 (SPVV…TPPT), and 365 to 375 (ASSAPTPLSST). Phosphothreonine is present on T329. Acidic residues predominate over residues 376–389 (SDDEEEEEEDEEAG). Residues 426-450 (APDPAPEPDPASAPAPASAPAPVVP) are compositionally biased toward pro residues. Zn(2+) is bound by residues C605, C608, C626, and C629. Residues 605–629 (CRSCRTYINPFVSFIDQRRWKCNLC) form a zinc finger-like region. The Gelsolin-like repeat unit spans residues 1141–1213 (PQPPLQKLSA…TLSSERARSF (73 aa)). At S1224 the chain carries Phosphoserine.

Belongs to the SEC23/SEC24 family. SEC24 subfamily. As to quaternary structure, COPII is composed of at least five proteins: the Sec23/24 complex, the Sec13/31 complex and SAR1. Interacts with STING1; promoting STING1 translocation to COPII vesicles in a STEEP1-dependent manner. Interacts with RNF139. Interacts with TMED2 and TMED10. Interacts with CNIH4.

It is found in the cytoplasmic vesicle. The protein resides in the COPII-coated vesicle membrane. It localises to the endoplasmic reticulum membrane. Its subcellular location is the cytoplasm. The protein localises to the cytosol. Functionally, component of the coat protein complex II (COPII) which promotes the formation of transport vesicles from the endoplasmic reticulum (ER). The coat has two main functions, the physical deformation of the endoplasmic reticulum membrane into vesicles and the selection of cargo molecules for their transport to the Golgi complex. Plays a central role in cargo selection within the COPII complex and together with SEC24A may have a different specificity compared to SEC24C and SEC24D. May package preferentially cargos with cytoplasmic DxE or LxxLE motifs and may also recognize conformational epitopes. The chain is Protein transport protein Sec24B from Homo sapiens (Human).